Consider the following 457-residue polypeptide: Aromatic amino acid transport protein AroP (457 aa).

The Cytoplasmic segment spans residues 1–19 (MMEGQQHGEQLKRGLKNRH). Residues 20–40 (IQLIALGGAIGTGLFLGSASV) traverse the membrane as a helical segment. Residues 41-42 (IQ) lie on the Periplasmic side of the membrane. The chain crosses the membrane as a helical span at residues 43-63 (SAGPGIILGYAIAGFIAFLIM). Residues 64–86 (RQLGEMVVEEPVAGSFSHFAYKY) lie on the Cytoplasmic side of the membrane. The chain crosses the membrane as a helical span at residues 87-107 (WGSFAGFASGWNYWVLYVLVA). At 108–117 (MAELTAVGKY) the chain is on the periplasmic side. A helical membrane pass occupies residues 118–138 (IQFWYPEIPTWVSAAVFFVVI). Residues 139-155 (NAINLTNVKVFGEMEFW) are Cytoplasmic-facing. Residues 156-176 (FAIIKVIAVVAMIIFGGWLLF) traverse the membrane as a helical segment. The Periplasmic segment spans residues 177 to 201 (SGNGGPQASVSNLWDQGGFLPHGFT). The helical transmembrane segment at 202 to 222 (GLVMMMAIIMFSFGGLELVGI) threads the bilayer. Topologically, residues 223–240 (TAAEADNPEQSIPKATNQ) are cytoplasmic. A helical membrane pass occupies residues 241-261 (VIYRILIFYIGSLAVLLSLMP). Over 262 to 271 (WTRVTADTSP) the chain is Periplasmic. Residues 272–292 (FVLIFHELGDTFVANALNIVV) form a helical membrane-spanning segment. The Cytoplasmic portion of the chain corresponds to 293-333 (LTAALSVYNSCVYCNSRMLFGLAQQGNAPKALASVDKRGVP). A helical membrane pass occupies residues 334–354 (VNTILVSALVTALCVLINYLA). Topologically, residues 355–358 (PESA) are periplasmic. Residues 359-379 (FGLLMALVVSALVINWAMISL) traverse the membrane as a helical segment. Residues 380-399 (AHMKFRRAKQEQGVVTRFPA) lie on the Cytoplasmic side of the membrane. Residues 400–420 (LLYPLGNWICLLFMAAVLVIM) form a helical membrane-spanning segment. At 421 to 425 (LMTPG) the chain is on the periplasmic side. A helical transmembrane segment spans residues 426 to 446 (MAISVYLIPVWLIVLGIGYLF). Over 447-457 (KEKTAKAVKAH) the chain is Cytoplasmic.

This sequence belongs to the amino acid-polyamine-organocation (APC) superfamily. Amino acid transporter (AAT) (TC 2.A.3.1) family.

The protein resides in the cell inner membrane. It carries out the reaction L-phenylalanine(in) + H(+)(in) = L-phenylalanine(out) + H(+)(out). The enzyme catalyses L-tryptophan(in) + H(+)(in) = L-tryptophan(out) + H(+)(out). It catalyses the reaction L-tyrosine(in) + H(+)(in) = L-tyrosine(out) + H(+)(out). Permease that is involved in the active transport across the cytoplasmic membrane of all three aromatic amino acids, phenylalanine, tyrosine and tryptophan. The protein is Aromatic amino acid transport protein AroP (aroP) of Shigella flexneri.